The sequence spans 69 residues: Cell division protein CrgA (69 aa).

Helical transmembrane passes span 14–34 (VWFP…MVLF) and 45–65 (AVGT…FAMM).

This sequence belongs to the CrgA family.

It localises to the cell membrane. In terms of biological role, involved in cell division. This Tropheryma whipplei (strain TW08/27) (Whipple's bacillus) protein is Cell division protein CrgA.